A 77-amino-acid chain; its full sequence is Small ribosomal subunit protein bS20 (77 aa).

The protein belongs to the bacterial ribosomal protein bS20 family.

In terms of biological role, binds directly to 16S ribosomal RNA. The polypeptide is Small ribosomal subunit protein bS20 (Streptococcus uberis (strain ATCC BAA-854 / 0140J)).